The primary structure comprises 285 residues: 4-hydroxybenzoate octaprenyltransferase (285 aa).

7 helical membrane passes run 17–37 (PVGIFLLLWPTLWALWIAGAG), 41–61 (PKVLLVFVAGVALMRSAGCVI), 92–112 (LLLFAGLCLVAFGLVLLLNPL), 135–155 (HWPQAYLGAAFGWAVPMAFAA), 158–178 (GTVPIAAWLLFIATVLWATVY), 216–236 (ALLLLLFWIGYREGLGFYYYL), and 263–283 (AFLNNNAFGAVIFGGIALHYL).

It belongs to the UbiA prenyltransferase family. Mg(2+) is required as a cofactor.

It localises to the cell inner membrane. The catalysed reaction is all-trans-octaprenyl diphosphate + 4-hydroxybenzoate = 4-hydroxy-3-(all-trans-octaprenyl)benzoate + diphosphate. The protein operates within cofactor biosynthesis; ubiquinone biosynthesis. Functionally, catalyzes the prenylation of para-hydroxybenzoate (PHB) with an all-trans polyprenyl group. Mediates the second step in the final reaction sequence of ubiquinone-8 (UQ-8) biosynthesis, which is the condensation of the polyisoprenoid side chain with PHB, generating the first membrane-bound Q intermediate 3-octaprenyl-4-hydroxybenzoate. This chain is 4-hydroxybenzoate octaprenyltransferase, found in Nitrosococcus oceani (strain ATCC 19707 / BCRC 17464 / JCM 30415 / NCIMB 11848 / C-107).